The chain runs to 406 residues: MIGEIISVGDELLEGHVLNTNSQYLSQQLFQIGINVKYQQTIGDDFDSLVSAFNNSLNRSDVIILTGGLGPTRDDITKEAVSRSLNLNLLLDENEYQRIKSFFDHLQKRMSENNKKQAYIPEGAEVLINQIGTAPGIFIEQEDKIVAMLPGPPREMKTVFLNELKPRLIKNITAEGYYKSSIIKLIGIGESQVDEIIKEIKIPNCEIVPLALRHQVHLILKSYSQNQITAEEQLKRLENMLQHKLSSFIWGRDDDKLEEIVVNTLKDKGLSLAVAESMTGGLIAGKLTDVSGASNVFHGGVVAYTEDAKLNSLTVSQKVLEKYSHVSEETSYELAKQIREKFNTDIGLGITGYAGPEGERVGLFHTVIVGSTGKRHLSRILPGGRTDIKKGAVIQSLNELRKFLSD.

This sequence belongs to the CinA family.

This Natranaerobius thermophilus (strain ATCC BAA-1301 / DSM 18059 / JW/NM-WN-LF) protein is Putative competence-damage inducible protein.